Here is a 372-residue protein sequence, read N- to C-terminus: DNA replication and repair protein RecF (372 aa).

30 to 37 lines the ATP pocket; that stretch reads GENAQGKT.

The protein belongs to the RecF family.

It localises to the cytoplasm. The RecF protein is involved in DNA metabolism; it is required for DNA replication and normal SOS inducibility. RecF binds preferentially to single-stranded, linear DNA. It also seems to bind ATP. The protein is DNA replication and repair protein RecF of Exiguobacterium sp. (strain ATCC BAA-1283 / AT1b).